The primary structure comprises 333 residues: Electron transfer flavoprotein subunit alpha, mitochondrial (333 aa).

A mitochondrion-targeting transit peptide spans 1–19 (MFRAAAPGQLRRAASLLRF). The segment at 20 to 204 (QSTLVIAEHA…GISEWLDQKL (185 aa)) is domain I. An N6-acetyllysine; alternate modification is found at lysine 59. Lysine 59 carries the N6-succinyllysine; alternate modification. An N6-acetyllysine modification is found at lysine 62. Residue lysine 69 is modified to N6-acetyllysine; alternate. Lysine 69 is subject to N6-succinyllysine; alternate. The residue at position 75 (lysine 75) is an N6-acetyllysine. Lysine 85 is modified (N6-acetyllysine; alternate). An N6-succinyllysine; alternate modification is found at lysine 85. Residue threonine 93 is modified to Phosphothreonine. N6-acetyllysine occurs at positions 101 and 139. Position 140 is a phosphoserine (serine 140). An N6-acetyllysine; alternate modification is found at lysine 158. An N6-succinyllysine; alternate modification is found at lysine 158. Lysine 164 carries the post-translational modification N6-acetyllysine. Lysine 187 carries the post-translational modification N6-succinyllysine. Position 203 is an N6-acetyllysine; alternate (lysine 203). Lysine 203 bears the N6-succinyllysine; alternate mark. The tract at residues 205-333 (TKSDRPELTG…PEMTEILKKK (129 aa)) is domain II. Lysine 216 bears the N6-succinyllysine mark. Arginine 223 contributes to the FAD binding site. Residues lysine 226 and lysine 232 each carry the N6-acetyllysine; alternate modification. Residues lysine 226 and lysine 232 each carry the N6-succinyllysine; alternate modification. Residues serine 248, 263-266 (VGQT), 281-286 (SGAIQH), and asparagine 300 each bind FAD. N6-succinyllysine is present on lysine 301. 318–319 (DL) contacts FAD.

Belongs to the ETF alpha-subunit/FixB family. As to quaternary structure, heterodimer composed of ETFA and ETFB. Identified in a complex that contains ETFA, ETFB and ETFRF1. Interaction with ETFRF1 promotes dissociation of the bound FAD and loss of electron transfer activity. Interacts with TASOR. It depends on FAD as a cofactor.

It localises to the mitochondrion matrix. Heterodimeric electron transfer flavoprotein that accepts electrons from several mitochondrial dehydrogenases, including acyl-CoA dehydrogenases, glutaryl-CoA and sarcosine dehydrogenase. It transfers the electrons to the main mitochondrial respiratory chain via ETF-ubiquinone oxidoreductase (ETF dehydrogenase). Required for normal mitochondrial fatty acid oxidation and normal amino acid metabolism. This chain is Electron transfer flavoprotein subunit alpha, mitochondrial (Etfa), found in Rattus norvegicus (Rat).